Consider the following 1995-residue polypeptide: uncharacterized protein (1995 aa).

7 consecutive transmembrane segments (helical) span residues Asn-31 to Lys-51, Phe-53 to Ala-73, Leu-106 to Thr-126, Phe-157 to Leu-177, Ile-212 to Ser-232, Phe-254 to Gln-274, and Ile-307 to Tyr-327. 2 disordered regions span residues Ser-1418–Ser-1441 and Asp-1848–Pro-1883. 2 stretches are compositionally biased toward basic residues: residues Ser-1422–Ser-1441 and Pro-1853–Asp-1863.

Belongs to the ycf78 family.

It is found in the plastid. The protein localises to the chloroplast membrane. In terms of biological role, essential for cell growth. May be involved in binding chloroplast DNA to either the chloroplast envelope or the thylakoid membrane. This is an uncharacterized protein from Chlamydomonas reinhardtii (Chlamydomonas smithii).